Reading from the N-terminus, the 89-residue chain is Small ribosomal subunit protein uS15 (89 aa).

It belongs to the universal ribosomal protein uS15 family. In terms of assembly, part of the 30S ribosomal subunit. Forms a bridge to the 50S subunit in the 70S ribosome, contacting the 23S rRNA.

In terms of biological role, one of the primary rRNA binding proteins, it binds directly to 16S rRNA where it helps nucleate assembly of the platform of the 30S subunit by binding and bridging several RNA helices of the 16S rRNA. Its function is as follows. Forms an intersubunit bridge (bridge B4) with the 23S rRNA of the 50S subunit in the ribosome. The sequence is that of Small ribosomal subunit protein uS15 from Chlamydia abortus (strain DSM 27085 / S26/3) (Chlamydophila abortus).